Here is a 584-residue protein sequence, read N- to C-terminus: DNA mismatch repair protein MutL (584 aa).

Belongs to the DNA mismatch repair MutL/HexB family.

This protein is involved in the repair of mismatches in DNA. It is required for dam-dependent methyl-directed DNA mismatch repair. May act as a 'molecular matchmaker', a protein that promotes the formation of a stable complex between two or more DNA-binding proteins in an ATP-dependent manner without itself being part of a final effector complex. This is DNA mismatch repair protein MutL from Buchnera aphidicola subsp. Acyrthosiphon pisum (strain Tuc7).